The chain runs to 473 residues: Glutamate--tRNA ligase (473 aa).

Positions 11–21 (PSPTGFLHIGG) match the 'HIGH' region motif. The 'KMSKS' region motif lies at 240 to 244 (KLSKR). K243 serves as a coordination point for ATP.

Belongs to the class-I aminoacyl-tRNA synthetase family. Glutamate--tRNA ligase type 1 subfamily. As to quaternary structure, monomer.

It is found in the cytoplasm. The catalysed reaction is tRNA(Glu) + L-glutamate + ATP = L-glutamyl-tRNA(Glu) + AMP + diphosphate. Catalyzes the attachment of glutamate to tRNA(Glu) in a two-step reaction: glutamate is first activated by ATP to form Glu-AMP and then transferred to the acceptor end of tRNA(Glu). In Rhodopseudomonas palustris (strain TIE-1), this protein is Glutamate--tRNA ligase.